Reading from the N-terminus, the 91-residue chain is Conotoxin Im9.1 (91 aa).

A signal peptide spans 1-23 (MSKVGVVPLIFLVLLSIAALQNG). Positions 24-55 (DDPRRQRDEKQSPQGDILRSTLTKYSYNIQRR) are excised as a propeptide. Cystine bridges form between Cys56–Cys72, Cys63–Cys83, and Cys66–Cys86.

It belongs to the conotoxin M superfamily. As to expression, expressed by the venom duct.

The protein localises to the secreted. Its function is as follows. Probable neurotoxin. The chain is Conotoxin Im9.1 from Conus imperialis (Imperial cone).